The sequence spans 300 residues: MELRQLRYFMEVAEREHVSEAADHLHVAQSAISRQIANLEEELNVTLFEREGRNIKLTPIGKEFLIHVKTAMKAIDYAKEQIDEYLDPHRGTVKIGFPTSLASQLLPTVISAFKEEYPHVEFLLRQGSYKFLIEAVRNRDIDLALLGPVPTNFSDITGKILFTEKIYALVPLNHPLAKQKTVHLIDLRNDQFVLFPEGFVLREMAIDTCKQAGFAPLVSTEGEDLDAIKGLVSAGMGVTLLPESTFAETTPRFTVKIPIEFPQVKRTVGIIKPKNRELAPSANDFYEFVIQFFSKLEQYQ.

The region spanning Met1–Thr58 is the HTH lysR-type domain. Positions Val18–Ala37 form a DNA-binding region, H-T-H motif.

It belongs to the LysR transcriptional regulatory family. Interacts with gutamate dehydrogenase RocG.

Its activity is regulated as follows. Activated by alpha-ketoglutarate and inhibited by glutamate and by RocG. In terms of biological role, positive regulator of glutamate biosynthesis (gltAB genes). Negatively regulates its own expression. The polypeptide is Transcriptional dual regulator GltC (gltC) (Bacillus subtilis (strain 168)).